A 97-amino-acid chain; its full sequence is Scorpine-like peptide Ev37 (97 aa).

The signal sequence occupies residues 1 to 19 (MNSKLTVIVLLALITIASC). The BetaSPN-type CS-alpha/beta domain occupies 55-95 (QNLCAFNVDTVGMCDADCKRQGKAKGVCHGTKCKCDVELSY). Cystine bridges form between C58–C82, C68–C87, and C72–C89.

This sequence belongs to the long chain scorpion toxin family. Class 3 subfamily. In terms of tissue distribution, expressed by the venom gland.

It localises to the secreted. In terms of biological role, selectively inhibits Kv1.3/KCNA3 channel (IC(50)=0.95 uM). Both N-terminal and C-terminal domains are likely involved in the interaction with Kv1.3/KCNA3, since neither its N-terminal domain (1-36) nor its C-terminal domain (37-78) block Kv1.3/KCNA3 channel. The protein is Scorpine-like peptide Ev37 of Euscorpiops validus (Scorpion).